The following is a 122-amino-acid chain: Large ribosomal subunit protein uL14 (122 aa).

It belongs to the universal ribosomal protein uL14 family. In terms of assembly, part of the 50S ribosomal subunit. Forms a cluster with proteins L3 and L19. In the 70S ribosome, L14 and L19 interact and together make contacts with the 16S rRNA in bridges B5 and B8.

Its function is as follows. Binds to 23S rRNA. Forms part of two intersubunit bridges in the 70S ribosome. This is Large ribosomal subunit protein uL14 from Streptococcus agalactiae serotype Ia (strain ATCC 27591 / A909 / CDC SS700).